Consider the following 198-residue polypeptide: MKKLKGLFLSLLLWVYPLKSEPINEGAYILEEIGDVLRFLPIFVGTVSLAMRDYRGLGELAVGTLVTQGVIYGLKGAFSTAHKDGARVGFAKRPCCNSWRGMPSGHAGGAFSAAGFVYYRYGWKPALPVIALAILTDTSRVVAGQHTILQVTIGSLIAWGFAYLFTSRYKPKRWMLYPEISSDFKGSSRYGVGFSYQW.

Residues 143–165 (AGQHTILQVTIGSLIAWGFAYLF) form a helical membrane-spanning segment.

This sequence belongs to the lipid A LpxF 4'-phosphatase family.

It localises to the cell inner membrane. It participates in bacterial outer membrane biogenesis; LPS lipid A biosynthesis. Its function is as follows. Removes the 4'-phosphate group from tetra- and hexaacylated lipid A species, has no 1-phosphatase or Kdo hydrolase activity. Absence of the 4'-phosphate group renders the bacteria resistant to host-derived cationic antimicrobial peptides (CAMP), allowing it to camouflage itself from the host innate immune response, and plays a critical role in the long-term colonization of the host's stomach. This is Lipid A 4'-phosphatase from Helicobacter pylori (strain J99 / ATCC 700824) (Campylobacter pylori J99).